The sequence spans 305 residues: Olfactory receptor 9G1 (305 aa).

Topologically, residues M1–L24 are extracellular. An N-linked (GlcNAc...) asparagine glycan is attached at N5. Residues G25–I45 traverse the membrane as a helical segment. The Cytoplasmic portion of the chain corresponds to V46–C53. Residues L54–S74 traverse the membrane as a helical segment. The Extracellular portion of the chain corresponds to V75–C98. A disulfide bond links C96 and C188. A helical membrane pass occupies residues Q99–Y119. At D120 to K138 the chain is on the cytoplasmic side. A helical transmembrane segment spans residues L139 to T159. At K160 to I196 the chain is on the extracellular side. Residues M197–S216 form a helical membrane-spanning segment. At Y217–A236 the chain is on the cytoplasmic side. A helical transmembrane segment spans residues F237–I257. Residues Y258 to D270 are Extracellular-facing. Residues K271 to L291 form a helical membrane-spanning segment. The Cytoplasmic portion of the chain corresponds to R292 to P305.

Belongs to the G-protein coupled receptor 1 family.

It is found in the cell membrane. Functionally, odorant receptor. The polypeptide is Olfactory receptor 9G1 (OR9G1) (Homo sapiens (Human)).